Here is a 451-residue protein sequence, read N- to C-terminus: Protein FAM117A (451 aa).

Positions 1–25 are enriched in gly residues; sequence MSGAAAGGRGGGSWGPGRGGAGGLR. Disordered stretches follow at residues 1 to 83 and 164 to 183; these read MSGA…RPQP and RTKLSRSGKEKERSCPVQGD. Residues Ser-29 and Ser-67 each carry the phosphoserine modification. Residues 149 to 175 adopt a coiled-coil conformation; sequence TDHRKEITKLKQQLQRTKLSRSGKEKE. Phosphoserine is present on residues Ser-193 and Ser-213. The disordered stretch occupies residues 242–293; that stretch reads DGHRAPAPPQNSSCDHSLLLEPGNLTSSPSVPLASPQPPSQASREEHQGATE. 2 positions are modified to phosphoserine: Ser-318 and Ser-326. Phosphothreonine is present on Thr-353. Residues 403-451 form a disordered region; that stretch reads SPGSPLPTASPRAPRKGPEASKASSLPSEPWQRSPPSEESVLFQSSLVV. Phosphoserine occurs at positions 412 and 426. A compositionally biased stretch (polar residues) spans 436-451; sequence SPPSEESVLFQSSLVV.

Belongs to the FAM117 family.

The polypeptide is Protein FAM117A (Fam117a) (Mus musculus (Mouse)).